The following is a 128-amino-acid chain: Cholecystokinin B (128 aa).

The signal sequence occupies residues 1–20 (MCSGVCICLLLAMLSASSKA). The propeptide occupies 21–108 (HQATGSLGED…FDQSHRINDR (88 aa)). The interval 47–67 (YARASSAGQKKSFQRTDGDQR) is disordered. Tyr110 bears the Sulfotyrosine mark. The residue at position 116 (Phe116) is a Phenylalanine amide. Positions 120–128 (SAEEYEYSS) are excised as a propeptide.

This sequence belongs to the gastrin/cholecystokinin family. In terms of processing, the precursor is cleaved by proteases to produce a number of active cholecystokinins. Brain and gastrointestinal tract.

It localises to the secreted. The sequence is that of Cholecystokinin B (cck-b) from Xenopus laevis (African clawed frog).